The primary structure comprises 654 residues: Polyvinylalcohol dehydrogenase (654 aa).

A signal peptide spans Met1 to Thr32. A Cytochrome c domain is found at Ala42 to Thr159. The heme c site is built by Cys55, Cys58, and His59.

This sequence belongs to the bacterial PQQ dehydrogenase family. In terms of assembly, monomer. Requires pyrroloquinoline quinone as cofactor.

It localises to the periplasm. It carries out the reaction a polyvinyl alcohol + 2n Fe(III)-[cytochrome c] = an oxidized polyvinyl alcohol + 2n Fe(II)-[cytochrome c] + 2n H(+). Catalyzes the oxidation of polyvinyl alcohol (PVA) in the polyvinyl alcohol degradation pathway. The protein is Polyvinylalcohol dehydrogenase (pvadh) of Sphingopyxis sp. (strain 113P3).